The sequence spans 335 residues: Agamous-like MADS-box protein AGL104 (335 aa).

Residues 1–61 (MGRVKLEIKR…DRLSLFSGKT (61 aa)) enclose the MADS-box domain. A coiled-coil region spans residues 124-151 (SDVEELEHEVCRLQQQLQMAEEELRRYE). The disordered stretch occupies residues 302–335 (MPAQQSDIPGVTAETQVDHEVSDYETKVPQLSSQ). The segment covering 317 to 327 (QVDHEVSDYET) has biased composition (basic and acidic residues).

Forms heterodimers with AGL30 and AGL65. In terms of tissue distribution, expressed in pollen.

It is found in the nucleus. In terms of biological role, probable transcription factor that forms heterodimers with the MADS-box proteins AGL30 and AGL65 and is involved in the regulation of pollen maturation at the late stages of pollen development and pollen tube growth. This is Agamous-like MADS-box protein AGL104 from Arabidopsis thaliana (Mouse-ear cress).